Here is a 367-residue protein sequence, read N- to C-terminus: 2-aminoethylphosphonate--pyruvate transaminase (367 aa).

N6-(pyridoxal phosphate)lysine is present on lysine 194.

Belongs to the class-V pyridoxal-phosphate-dependent aminotransferase family. PhnW subfamily. Homodimer. Pyridoxal 5'-phosphate is required as a cofactor.

The enzyme catalyses (2-aminoethyl)phosphonate + pyruvate = phosphonoacetaldehyde + L-alanine. Involved in phosphonate degradation. This is 2-aminoethylphosphonate--pyruvate transaminase from Salmonella paratyphi B (strain ATCC BAA-1250 / SPB7).